Consider the following 800-residue polypeptide: MNRFFISTLLLLAQHLAPAAASCGLANEASLSANEVQDIYHDFVATSINYADLLKRNEDLNASLSTGSPVEITSTSCTTDTSASTPIITESTSSTSSASTTGSSSSPLPSTSTSCTTSTSIPPTGGSSSLSTPITPTVPPTSTSSTSIPIPPTSTSSTDTNSNPLPTTSTSCTTSTSIPPTGGSSSLSTPITPTVPPTSTSSTSIPIPPTSTSSTDTNSSPLPTTSTSCTTSTSIPTGGSSSLSTPITPTVPPTSTSSTSIPIPPTSTSSTDTNSSPLPTTSTSCTTSTSIPPTGNSTTPVTPTVPPTSTSSTSTPPPPASTSSTGTSSSPLPSTSTSCTTSTSIPPTGNSTTPVTPTVPPTSTSSTSTPPPPASTSSTGTSSSPLLSTSTSCTTSTSIPPTGNSTTPVTPTVPPTSSSTPLTTTNCTTSTSVPYTSTPVTSTPLATTNCTTSTSVPYTSTPVTSTPLTTTNCTTSTSIPYTSTPVTSTPLTTTNCTTSTSVPYTSTPVTSSNYTISSSTPVTSTPVTTTNCTTSTSVLYTSTPVTSTPLATTNCTTSTSVPYTSTPVTSSNYTISSSTPVTSTPVTTTNCTTSTSVLYTSTPITSPNSTSSSSTQVSWNSTTPITGTSTSKVTSSTSIPLTSTNRTSTTFTSSTSISTSSSSTATSSTSFASESSSFYSNVTTSSSTVSTPPPTTSFPSTFTTSFITSSSLSSIPNNSTEVKTASTSSGTEIKTASTSSGSSSSSSYTPASSTSTTTSSVSSRQSSSSSSFTPSSAISTAKSSFVLSTLSILIALYMVA.

The N-terminal stretch at 1–21 (MNRFFISTLLLLAQHLAPAAA) is a signal peptide. The span at 63 to 72 (SLSTGSPVEI) shows a compositional bias: polar residues. Disordered regions lie at residues 63–470 (SLST…PLTT), 602–670 (TPIT…SSTS), and 710–776 (SSLS…TPSS). 4 stretches are compositionally biased toward low complexity: residues 73-314 (TSTS…SSTS), 321-368 (STSS…SSTS), 375-444 (STSS…TSTP), and 451-470 (TTST…PLTT). The segment covering 710–720 (SSLSSIPNNST) has biased composition (low complexity). The span at 721 to 734 (EVKTASTSSGTEIK) shows a compositional bias: polar residues. The span at 735–776 (TASTSSGSSSSSSYTPASSTSTTTSSVSSRQSSSSSSFTPSS) shows a compositional bias: low complexity.

It localises to the secreted. Its subcellular location is the cell surface. This is an uncharacterized protein from Schizosaccharomyces pombe (strain 972 / ATCC 24843) (Fission yeast).